The sequence spans 77 residues: Putative Fis-like DNA-binding protein (77 aa).

Residues 53-72 constitute a DNA-binding region (H-T-H motif); that stretch reads QSLAADYLGINRNTLRKKLQ.

The protein belongs to the transcriptional regulatory Fis family.

In Ralstonia nicotianae (strain ATCC BAA-1114 / GMI1000) (Ralstonia solanacearum), this protein is Putative Fis-like DNA-binding protein.